Here is a 657-residue protein sequence, read N- to C-terminus: Protein PSK SIMULATOR 1 (657 aa).

Polar residues-rich tracts occupy residues 1 to 15 (MGGL…NNAP), 26 to 39 (HLNN…SHSG), 62 to 76 (ESFS…SHPQ), and 540 to 556 (RSPN…SHNP). 2 disordered regions span residues 1-80 (MGGL…NIED) and 534-559 (PVKS…PSMG). G2 carries the N-myristoyl glycine lipid modification.

It localises to the nucleus. Functionally, promotes seedling growth probably via the regulation of phytosulfokine (PSK) signaling; PSK are peptide phytohormones acting as growth factors. Together with PSI2 and PSI3, required during vegetative growth and reproduction. May also have a function in carbohydrate metabolism. The chain is Protein PSK SIMULATOR 1 from Arabidopsis thaliana (Mouse-ear cress).